A 638-amino-acid chain; its full sequence is uncharacterized protein (638 aa).

The N-terminal stretch at 1–31 is a signal peptide; sequence MKFIKFNDSTIDSFLFMMLTDLAKTLTKSEA. 4 stretches are compositionally biased toward basic and acidic residues: residues 247–256, 273–284, 301–310, and 329–342; these read EEKKAPKLSD, EEMPTWHRETEA, DLGKDASREG, and RKDY…ESQK. Disordered stretches follow at residues 247–285 and 301–354; these read EEKK…TEAP and DLGK…ADGK. The VWFA domain occupies 445–632; that stretch reads FTLLVDCSAS…DVLYPLLKKL (188 aa).

This is an uncharacterized protein from Bacillus subtilis (strain 168).